Consider the following 327-residue polypeptide: tRNA N6-adenosine threonylcarbamoyltransferase (327 aa).

Residues His-109 and His-113 each coordinate Fe cation. Substrate-binding positions include Met-132–Gly-136, Asp-165, Gly-178, Asp-182, and Asn-268. Residue Asp-296 coordinates Fe cation.

It belongs to the KAE1 / TsaD family. As to quaternary structure, forms a hexamer composed of two TsaB, TsaD and TsaE trimers. It depends on Fe(2+) as a cofactor.

Its subcellular location is the cytoplasm. It catalyses the reaction L-threonylcarbamoyladenylate + adenosine(37) in tRNA = N(6)-L-threonylcarbamoyladenosine(37) in tRNA + AMP + H(+). Required for the formation of a threonylcarbamoyl group on adenosine at position 37 (t(6)A37) in tRNAs that read codons beginning with adenine. Is involved in the transfer of the threonylcarbamoyl moiety of threonylcarbamoyl-AMP (TC-AMP) to the N6 group of A37, together with TsaE and TsaB. TsaD likely plays a direct catalytic role in this reaction. The polypeptide is tRNA N6-adenosine threonylcarbamoyltransferase (Thermotoga maritima (strain ATCC 43589 / DSM 3109 / JCM 10099 / NBRC 100826 / MSB8)).